Consider the following 269-residue polypeptide: C-type lectin domain family 1 member A (269 aa).

Topologically, residues 1-51 (MQAKYSSTRDMLDDDDTTISLYSGTSTVTRRAEPRHSENGTPSSVWRPVAL) are cytoplasmic. The helical; Signal-anchor for type II membrane protein transmembrane segment at 52-72 (TLLTLCLVLLVGLAALGLVFF) threads the bilayer. The Extracellular portion of the chain corresponds to 73–269 (QFYQLSNIQQ…AGRVVPGELQ (197 aa)). N-linked (GlcNAc...) asparagine glycosylation is found at Asn94, Asn126, Asn168, and Asn202. A C-type lectin domain is found at 143-257 (YGDKCYQFYK…CKELRRCACE (115 aa)). 2 cysteine pairs are disulfide-bonded: Cys164/Cys256 and Cys235/Cys248.

The protein localises to the membrane. The sequence is that of C-type lectin domain family 1 member A (Clec1a) from Mus musculus (Mouse).